Reading from the N-terminus, the 287-residue chain is Cysteine-rich repeat secretory protein 58 (287 aa).

The N-terminal stretch at 1–20 (METTKKLFALLCLFVTMNQA) is a signal peptide. At 21 to 267 (ISVSDPDDME…GSFSHRGNNK (247 aa)) the chain is on the extracellular side. 2 Gnk2-homologous domains span residues 28-130 (DMET…DKFF) and 135-246 (ETNP…TYNS). Asparagine 39, asparagine 43, asparagine 59, asparagine 68, asparagine 89, asparagine 99, asparagine 107, asparagine 208, and asparagine 245 each carry an N-linked (GlcNAc...) asparagine glycan. The chain crosses the membrane as a helical span at residues 268–286 (LLGGMVLAVSVSVFAFLSL). Position 287 (valine 287) is a topological domain, cytoplasmic.

The protein belongs to the cysteine-rich repeat secretory protein family.

The protein resides in the membrane. This chain is Cysteine-rich repeat secretory protein 58 (CRRSP58), found in Arabidopsis thaliana (Mouse-ear cress).